The sequence spans 362 residues: Leucoanthocyanidin dioxygenase (362 aa).

A Fe2OG dioxygenase domain is found at 211–313 (MEELLLQKKI…RISWAVFCEP (103 aa)). Fe cation contacts are provided by His-238, Asp-240, and His-294.

It belongs to the iron/ascorbate-dependent oxidoreductase family. The cofactor is Fe cation. L-ascorbate serves as cofactor.

The enzyme catalyses a (2R,3S,4S)-leucoanthocyanidin + 2-oxoglutarate + O2 = a 4-H-anthocyanidin with a 3-hydroxy group + succinate + CO2 + 2 H2O. Its pathway is pigment biosynthesis; anthocyanin biosynthesis. Functionally, oxidation of leucoanthocyanidins into anthocyanidins. This chain is Leucoanthocyanidin dioxygenase, found in Vitis vinifera (Grape).